A 344-amino-acid chain; its full sequence is SUMO-activating enzyme subunit 1 (344 aa).

It belongs to the ubiquitin-activating E1 family. In terms of assembly, heterodimer of sae1 and uba2/sae2. The heterodimer corresponds to the two domains that are encoded on a single polypeptide chain in ubiquitin-activating enzyme E1. Interacts with ube2i.

The protein localises to the nucleus. Its pathway is protein modification; protein sumoylation. Functionally, the heterodimer acts as an E1 ligase for sumo1, sumo2, and sumo3. It mediates ATP-dependent activation of sumo proteins followed by formation of a thioester bond between a sumo protein and a conserved active site cysteine residue on uba2/sae2. In Xenopus laevis (African clawed frog), this protein is SUMO-activating enzyme subunit 1 (sae1).